Reading from the N-terminus, the 177-residue chain is Ubiquinol-cytochrome c reductase iron-sulfur subunit (177 aa).

A helical transmembrane segment spans residues 18-38; it reads MVLTASSVAAIGAVCTLWPLV. The Rieske domain occupies 88 to 175; sequence ARAVKMSELI…YTFISDKKIR (88 aa). [2Fe-2S] cluster is bound by residues cysteine 120, histidine 122, cysteine 139, and histidine 142. An intrachain disulfide couples cysteine 125 to cysteine 141.

The protein belongs to the Rieske iron-sulfur protein family. The main subunits of complex b-c1 are: cytochrome b, cytochrome c1 and the Rieske protein. [2Fe-2S] cluster serves as cofactor.

Its subcellular location is the cell membrane. The enzyme catalyses a quinol + 2 Fe(III)-[cytochrome c](out) = a quinone + 2 Fe(II)-[cytochrome c](out) + 2 H(+)(out). Component of the ubiquinol-cytochrome c reductase complex (complex III or cytochrome b-c1 complex), which is a respiratory chain that generates an electrochemical potential coupled to ATP synthesis. In Rickettsia conorii (strain ATCC VR-613 / Malish 7), this protein is Ubiquinol-cytochrome c reductase iron-sulfur subunit (petA).